Here is a 360-residue protein sequence, read N- to C-terminus: Deoxyhypusine hydroxylase (360 aa).

HEAT-like PBS-type repeat units lie at residues 56–82, 89–115, and 213–245; these read LKHE…ILQD, VRHE…YRSD, and ERYR…GLQD. Residues H58, E59, H91, and E92 each coordinate Fe cation. Positions 252, 253, 285, and 286 each coordinate Fe cation.

This sequence belongs to the deoxyhypusine hydroxylase family. Fe(2+) serves as cofactor.

The protein resides in the cytoplasm. It is found in the nucleus. It carries out the reaction [eIF5A protein]-deoxyhypusine + AH2 + O2 = [eIF5A protein]-hypusine + A + H2O. It functions in the pathway protein modification; eIF5A hypusination. Its function is as follows. Catalyzes the hydroxylation of the N(6)-(4-aminobutyl)-L-lysine intermediate to form hypusine, an essential post-translational modification only found in mature eIF-5A factor. This is Deoxyhypusine hydroxylase from Mycosarcoma maydis (Corn smut fungus).